We begin with the raw amino-acid sequence, 458 residues long: Bifunctional protein GlmU (458 aa).

The pyrophosphorylase stretch occupies residues 1–229 (MTNYAIILAA…FNESLGVNDR (229 aa)). UDP-N-acetyl-alpha-D-glucosamine contacts are provided by residues 8 to 11 (LAAG), Lys22, Gln72, and 77 to 78 (GT). Position 102 (Asp102) interacts with Mg(2+). Positions 139, 154, 169, and 227 each coordinate UDP-N-acetyl-alpha-D-glucosamine. Asn227 contributes to the Mg(2+) binding site. The tract at residues 230–250 (VALATAESVMRRRINKAHMIN) is linker. The tract at residues 251-458 (GVTFQNPDAT…AKRLPHYPQK (208 aa)) is N-acetyltransferase. 2 residues coordinate UDP-N-acetyl-alpha-D-glucosamine: Arg332 and Lys350. His362 serves as the catalytic Proton acceptor. UDP-N-acetyl-alpha-D-glucosamine is bound by residues Tyr365 and Asn376. Residues Ala379, 385–386 (NY), Ser404, Ala422, and Arg439 contribute to the acetyl-CoA site.

The protein in the N-terminal section; belongs to the N-acetylglucosamine-1-phosphate uridyltransferase family. In the C-terminal section; belongs to the transferase hexapeptide repeat family. In terms of assembly, homotrimer. The cofactor is Mg(2+).

It is found in the cytoplasm. The enzyme catalyses alpha-D-glucosamine 1-phosphate + acetyl-CoA = N-acetyl-alpha-D-glucosamine 1-phosphate + CoA + H(+). The catalysed reaction is N-acetyl-alpha-D-glucosamine 1-phosphate + UTP + H(+) = UDP-N-acetyl-alpha-D-glucosamine + diphosphate. It participates in nucleotide-sugar biosynthesis; UDP-N-acetyl-alpha-D-glucosamine biosynthesis; N-acetyl-alpha-D-glucosamine 1-phosphate from alpha-D-glucosamine 6-phosphate (route II): step 2/2. Its pathway is nucleotide-sugar biosynthesis; UDP-N-acetyl-alpha-D-glucosamine biosynthesis; UDP-N-acetyl-alpha-D-glucosamine from N-acetyl-alpha-D-glucosamine 1-phosphate: step 1/1. It functions in the pathway bacterial outer membrane biogenesis; LPS lipid A biosynthesis. In terms of biological role, catalyzes the last two sequential reactions in the de novo biosynthetic pathway for UDP-N-acetylglucosamine (UDP-GlcNAc). The C-terminal domain catalyzes the transfer of acetyl group from acetyl coenzyme A to glucosamine-1-phosphate (GlcN-1-P) to produce N-acetylglucosamine-1-phosphate (GlcNAc-1-P), which is converted into UDP-GlcNAc by the transfer of uridine 5-monophosphate (from uridine 5-triphosphate), a reaction catalyzed by the N-terminal domain. The protein is Bifunctional protein GlmU of Streptococcus uberis (strain ATCC BAA-854 / 0140J).